Consider the following 445-residue polypeptide: Secretin receptor (445 aa).

A signal peptide spans 1-21 (MCPRPGPPLGLWLLLGFACAA). Residues 22–137 (HLVGAPPRLC…HERQHAYLLK (116 aa)) are Extracellular-facing. Disulfide bonds link cysteine 44–cysteine 71, cysteine 62–cysteine 103, and cysteine 85–cysteine 119. 4 N-linked (GlcNAc...) asparagine glycosylation sites follow: asparagine 68, asparagine 96, asparagine 102, and asparagine 124. A helical transmembrane segment spans residues 138-163 (LKVMYTVGYSSSLVMLLVALGILCAF). Residues 164–170 (RRLHCTR) are Cytoplasmic-facing. The chain crosses the membrane as a helical span at residues 171-191 (NYIHMHLFLSFILRALSNFIK). Over 192-212 (DAVLFSSDDAIHCDAHRVGCK) the chain is Extracellular. A disulfide bridge connects residues cysteine 211 and cysteine 281. The helical transmembrane segment at 213-235 (LVMVFFQYCIMANYAWLLVEGLY) threads the bilayer. Residues 236-250 (LHSLLVVSFFSERKC) are Cytoplasmic-facing. Residues 251 to 272 (LQGFVVLGWGSPAMFVTSWAVT) form a helical membrane-spanning segment. Residues 273 to 287 (RHFLEDSGCWDINAN) lie on the Extracellular side of the membrane. The chain crosses the membrane as a helical span at residues 288–311 (AAIWWVIRGPVILSILINFILFIN). Residues 312 to 336 (ILRILTRKLRTQETRGQDMNHYKRL) lie on the Cytoplasmic side of the membrane. A helical membrane pass occupies residues 337 to 352 (ARSTLLLIPLFGVHYI). The Extracellular segment spans residues 353–363 (VFVFSPEGAME). A helical membrane pass occupies residues 364 to 387 (IQLFFELALGSFQGLVVAVLYCFL). Topologically, residues 388–445 (NGEVQLEVQKKWQQWHLWEPPLCPVALSSSFSNGTSSLNSTKACPSGRSRDTCKVSII) are cytoplasmic.

Belongs to the G-protein coupled receptor 2 family. Post-translationally, phosphorylated on Ser and Thr residues at the cytoplasmic C-terminus by G protein-coupled receptor kinases (GRKs).

Its subcellular location is the cell membrane. It is found in the basolateral cell membrane. G protein-coupled receptor activated by secretin (SCT), which is involved in different processes such as regulation of the pH of the duodenal content, food intake and water homeostasis. Ligand binding causes a conformation change that triggers signaling via guanine nucleotide-binding proteins (G proteins) and activates cAMP-dependent pathway. Upon binding to secretin, regulates the pH of the duodenum by (1) inhibiting the secretion of gastric acid from the parietal cells of the stomach and (2) stimulating the production of bicarbonate (NaHCO(3)) from the ductal cells of the pancreas. In addition to regulating the pH of the duodenal content, plays a central role in diet induced thermogenesis: acts as a non-sympathetic brown fat (BAT) activator mediating prandial thermogenesis, which consequentially induces satiation. Mechanistically, secretin released by the gut after a meal binds to secretin receptor (SCTR) in brown adipocytes, activating brown fat thermogenesis by stimulating lipolysis, which is sensed in the brain and promotes satiation. Also able to stimulate lipolysis in white adipocytes. Also plays an important role in cellular osmoregulation by regulating renal water reabsorption. Also plays a role in the central nervous system: required for synaptic plasticity. This chain is Secretin receptor (SCTR), found in Oryctolagus cuniculus (Rabbit).